We begin with the raw amino-acid sequence, 430 residues long: Adenylosuccinate synthetase (430 aa).

Residues 12 to 18 (GDEGKGK) and 40 to 42 (GHT) contribute to the GTP site. Aspartate 13 (proton acceptor) is an active-site residue. Positions 13 and 40 each coordinate Mg(2+). IMP contacts are provided by residues 13–16 (DEGK), 38–41 (NAGH), threonine 129, arginine 143, glutamine 224, threonine 239, and arginine 303. Histidine 41 (proton donor) is an active-site residue. 299 to 305 (TVSNRER) serves as a coordination point for substrate. GTP is bound by residues arginine 305, 331–333 (KLD), and 413–415 (STG).

It belongs to the adenylosuccinate synthetase family. Homodimer. Mg(2+) serves as cofactor.

The protein localises to the cytoplasm. It carries out the reaction IMP + L-aspartate + GTP = N(6)-(1,2-dicarboxyethyl)-AMP + GDP + phosphate + 2 H(+). It functions in the pathway purine metabolism; AMP biosynthesis via de novo pathway; AMP from IMP: step 1/2. Functionally, plays an important role in the de novo pathway of purine nucleotide biosynthesis. Catalyzes the first committed step in the biosynthesis of AMP from IMP. The protein is Adenylosuccinate synthetase of Ehrlichia ruminantium (strain Gardel).